The chain runs to 452 residues: 5'-nucleotidase domain-containing protein 1 (452 aa).

Catalysis depends on Asp-16, which acts as the Nucleophile. 2 residues coordinate Mg(2+): Asp-16 and Asp-18. Asp-18 serves as the catalytic Proton donor. Lys-171 bears the N6-acetyllysine mark. Asp-313 serves as a coordination point for Mg(2+). A compositionally biased stretch (basic and acidic residues) spans 339–361; that stretch reads GDKDGKPEESEPEEKKGKYEGSK. The tract at residues 339-365 is disordered; that stretch reads GDKDGKPEESEPEEKKGKYEGSKAKPL.

It belongs to the 5'(3')-deoxyribonucleotidase family.

This Bos taurus (Bovine) protein is 5'-nucleotidase domain-containing protein 1 (NT5DC1).